Reading from the N-terminus, the 495-residue chain is Glucose-6-phosphate 1-dehydrogenase (495 aa).

Ser1 carries the post-translational modification N-acetylserine. NADP(+)-binding positions include 15 to 22 (GASGDLAR), Arg49, and Lys149. D-glucose 6-phosphate-binding positions include Lys149, 179 to 183 (HYLGK), Glu217, and Asp236. The active-site Proton acceptor is the His241. An NADP(+)-binding site is contributed by Arg332. Lys335 is a D-glucose 6-phosphate binding site. The NADP(+) site is built by Lys341, Arg345, and Arg367. Gln369 provides a ligand contact to D-glucose 6-phosphate. NADP(+) is bound by residues 375–377 (YLK), 395–397 (DLT), and Lys463.

This sequence belongs to the glucose-6-phosphate dehydrogenase family.

It catalyses the reaction D-glucose 6-phosphate + NADP(+) = 6-phospho-D-glucono-1,5-lactone + NADPH + H(+). It participates in carbohydrate degradation; pentose phosphate pathway; D-ribulose 5-phosphate from D-glucose 6-phosphate (oxidative stage): step 1/3. In terms of biological role, catalyzes the rate-limiting step of the oxidative pentose-phosphate pathway, which represents a route for the dissimilation of carbohydrates besides glycolysis. The main function of this enzyme is to provide reducing power (NADPH) and pentose phosphates for fatty acid and nucleic acid synthesis. This Cyberlindnera jadinii (Torula yeast) protein is Glucose-6-phosphate 1-dehydrogenase.